The primary structure comprises 807 residues: Leucine--tRNA ligase (807 aa).

Positions 40–51 (PYPSGQGLHVGH) match the 'HIGH' region motif. The 'KMSKS' region signature appears at 575–579 (KMSKS). Residue K578 participates in ATP binding.

This sequence belongs to the class-I aminoacyl-tRNA synthetase family.

It localises to the cytoplasm. It catalyses the reaction tRNA(Leu) + L-leucine + ATP = L-leucyl-tRNA(Leu) + AMP + diphosphate. The polypeptide is Leucine--tRNA ligase (Latilactobacillus sakei subsp. sakei (strain 23K) (Lactobacillus sakei subsp. sakei)).